A 468-amino-acid chain; its full sequence is COBRA-like protein 5 (468 aa).

The N-terminal stretch at M1–A22 is a signal peptide. N-linked (GlcNAc...) asparagine glycosylation is found at N31, N156, N164, and N228. Residues G251–E278 form a disordered region. N340, N355, and N374 each carry an N-linked (GlcNAc...) asparagine glycan. N443 is lipidated: GPI-anchor amidated asparagine. A propeptide spans S444 to A468 (removed in mature form).

Belongs to the COBRA family. Expressed mainly in developing sclerenchyma cells and in vascular bundles.

It is found in the cell membrane. In terms of biological role, involved in determining the orientation of cell expansion, probably by playing an important role in cellulose deposition. May act by recruiting cellulose synthesizing complexes to discrete positions on the cell surface. The protein is COBRA-like protein 5 (BC1) of Oryza sativa subsp. indica (Rice).